Consider the following 257-residue polypeptide: uncharacterized protein (257 aa).

The N-terminal stretch at 1–22 (MGYLKRFALYISVMILMFAIAG) is a signal peptide. A lipid anchor (N-palmitoyl cysteine) is attached at C23. C23 carries the S-diacylglycerol cysteine lipid modification.

Belongs to the staphylococcal tandem lipoprotein family.

The protein resides in the cell membrane. This is an uncharacterized protein from Staphylococcus aureus (strain MRSA252).